Reading from the N-terminus, the 434-residue chain is Nicotinate phosphoribosyltransferase (434 aa).

His-242 bears the Phosphohistidine; by autocatalysis mark.

This sequence belongs to the NAPRTase family. Transiently phosphorylated on a His residue during the reaction cycle. Phosphorylation strongly increases the affinity for substrates and increases the rate of nicotinate D-ribonucleotide production. Dephosphorylation regenerates the low-affinity form of the enzyme, leading to product release.

It catalyses the reaction nicotinate + 5-phospho-alpha-D-ribose 1-diphosphate + ATP + H2O = nicotinate beta-D-ribonucleotide + ADP + phosphate + diphosphate. It participates in cofactor biosynthesis; NAD(+) biosynthesis; nicotinate D-ribonucleotide from nicotinate: step 1/1. Its function is as follows. Catalyzes the synthesis of beta-nicotinate D-ribonucleotide from nicotinate and 5-phospho-D-ribose 1-phosphate at the expense of ATP. This is Nicotinate phosphoribosyltransferase from Brucella melitensis biotype 1 (strain ATCC 23456 / CCUG 17765 / NCTC 10094 / 16M).